A 544-amino-acid polypeptide reads, in one-letter code: Putative lipase ATG15 (544 aa).

At 1–45 the chain is on the cytoplasmic side; the sequence is MVADFDSGWYEGAGDELGQGARNGVLRERLGGNEKAQVVRSRRKA. The chain crosses the membrane as a helical; Signal-anchor for type II membrane protein span at residues 46–66; it reads VAWNVLMVLGLILYVLYSACF. The Lumenal portion of the chain corresponds to 67-544; the sequence is AQARQWWRTN…NWFGYCTEYA (478 aa). 3 N-linked (GlcNAc...) asparagine glycosylation sites follow: Asn-200, Asn-229, and Asn-234. Catalysis depends on Ser-362, which acts as the Charge relay system. A disordered region spans residues 508–530; that stretch reads PMPSSVASKPTPTPTSPGSPSST.

It belongs to the AB hydrolase superfamily. Lipase family. Binds to both phosphatidylinositol (PI) and phosphatidylinositol 3,5-bisphosphate (PIP2).

It localises to the endosome. Its subcellular location is the multivesicular body membrane. The protein localises to the prevacuolar compartment membrane. The enzyme catalyses a triacylglycerol + H2O = a diacylglycerol + a fatty acid + H(+). Functionally, lipase which is essential for lysis of subvacuolar cytoplasm to vacuole targeted bodies and intravacuolar autophagic bodies. Involved in the lysis of intravacuolar multivesicular body (MVB) vesicles. The intravacuolar membrane disintegration by ATG15 is critical to life span extension. The polypeptide is Putative lipase ATG15 (ATG15) (Eremothecium gossypii (strain ATCC 10895 / CBS 109.51 / FGSC 9923 / NRRL Y-1056) (Yeast)).